We begin with the raw amino-acid sequence, 543 residues long: Glucose-6-phosphate isomerase (543 aa).

Residue Glu353 is the Proton donor of the active site. Catalysis depends on residues His384 and Lys512.

The protein belongs to the GPI family.

It localises to the cytoplasm. It catalyses the reaction alpha-D-glucose 6-phosphate = beta-D-fructose 6-phosphate. It participates in carbohydrate biosynthesis; gluconeogenesis. The protein operates within carbohydrate degradation; glycolysis; D-glyceraldehyde 3-phosphate and glycerone phosphate from D-glucose: step 2/4. In terms of biological role, catalyzes the reversible isomerization of glucose-6-phosphate to fructose-6-phosphate. The chain is Glucose-6-phosphate isomerase from Christiangramia forsetii (strain DSM 17595 / CGMCC 1.15422 / KT0803) (Gramella forsetii).